The chain runs to 87 residues: uncharacterized protein (87 aa).

The 2Fe-2S ferredoxin-type domain occupies 4-87 (SIIEITNIKK…KPKGNITIKI (84 aa)). Cys-38, Cys-43, Cys-46, and Cys-75 together coordinate [2Fe-2S] cluster.

[2Fe-2S] cluster is required as a cofactor.

This is an uncharacterized protein from Buchnera aphidicola subsp. Acyrthosiphon pisum (strain APS) (Acyrthosiphon pisum symbiotic bacterium).